Here is a 104-residue protein sequence, read N- to C-terminus: Large ribosomal subunit protein bL21 (104 aa).

Belongs to the bacterial ribosomal protein bL21 family. Part of the 50S ribosomal subunit. Contacts protein L20.

In terms of biological role, this protein binds to 23S rRNA in the presence of protein L20. This chain is Large ribosomal subunit protein bL21, found in Allorhizobium ampelinum (strain ATCC BAA-846 / DSM 112012 / S4) (Agrobacterium vitis (strain S4)).